The chain runs to 507 residues: Dihydrolipoyllysine-residue acetyltransferase component of pyruvate dehydrogenase complex, mitochondrial (507 aa).

Positions 77–153 constitute a Lipoyl-binding domain; that stretch reads HNRVALPALS…PIGKLLCIIV (77 aa). N6-lipoyllysine is present on Lys118. Disordered stretches follow at residues 168 to 223 and 248 to 270; these read DGAS…VSAS and RILA…TQAV. Residues 221-258 form the Peripheral subunit-binding (PSBD) domain; that stretch reads SASPFAKKLAAENGLDLSGVSGSGPGGRILASDLSQAP. Catalysis depends on residues His480 and Asp484.

Belongs to the 2-oxoacid dehydrogenase family. The cofactor is (R)-lipoate.

It is found in the mitochondrion matrix. It carries out the reaction N(6)-[(R)-dihydrolipoyl]-L-lysyl-[protein] + acetyl-CoA = N(6)-[(R)-S(8)-acetyldihydrolipoyl]-L-lysyl-[protein] + CoA. Its function is as follows. The pyruvate dehydrogenase complex catalyzes the overall conversion of pyruvate to acetyl-CoA and CO(2). It contains multiple copies of three enzymatic components: pyruvate dehydrogenase (E1), dihydrolipoamide acetyltransferase (E2) and lipoamide dehydrogenase (E3). The chain is Dihydrolipoyllysine-residue acetyltransferase component of pyruvate dehydrogenase complex, mitochondrial from Caenorhabditis elegans.